Consider the following 544-residue polypeptide: Chaperonin GroEL (544 aa).

Residues 29 to 32 (TLGP), 86 to 90 (DGTTT), Gly-413, 476 to 478 (NAA), and Asp-492 each bind ATP.

It belongs to the chaperonin (HSP60) family. As to quaternary structure, forms a cylinder of 14 subunits composed of two heptameric rings stacked back-to-back. Interacts with the co-chaperonin GroES.

The protein resides in the cytoplasm. The enzyme catalyses ATP + H2O + a folded polypeptide = ADP + phosphate + an unfolded polypeptide.. In terms of biological role, together with its co-chaperonin GroES, plays an essential role in assisting protein folding. The GroEL-GroES system forms a nano-cage that allows encapsulation of the non-native substrate proteins and provides a physical environment optimized to promote and accelerate protein folding. This chain is Chaperonin GroEL, found in Bacillus pumilus (strain SAFR-032).